The following is a 1054-amino-acid chain: SMC5-SMC6 complex localization factor protein 1 (1054 aa).

2 consecutive BRCT domains span residues 2–80 (EDSA…AKSG) and 121–199 (PGAF…LLEK). Residues 283-303 (RHGLENQKETKKKDKNIQRSY) form a disordered region. Residues 284-299 (HGLENQKETKKKDKNI) show a composition bias toward basic and acidic residues. The tract at residues 407 to 1054 (PRGILNLIEN…MMCQSITELS (648 aa)) is NSE5-like domain; mediates interaction with SLF2. ANK repeat units follow at residues 802 to 832 (KGET…DINV), 836 to 865 (AGWT…EVDL), and 870 to 900 (DGVT…ELLQ).

Interacts (via BRCT domains) with RAD18 (via C-terminus and phosphorylated form); this interaction is required for efficient repair of UV-induced DNA damage. Interacts (via N-terminus) with SLF2; this interaction links RAD18 to the SMC5-SMC6 complex. Interacts (via BRCT domains) with RAD18; this interaction occurs in a SLF2-independent manner. Interacts with SMC6. In terms of tissue distribution, widely expressed. Expressed in testis. Expressed in spermatocytes.

Its subcellular location is the nucleus. The protein localises to the cytoplasm. It is found in the cytoskeleton. The protein resides in the microtubule organizing center. It localises to the centrosome. In terms of biological role, plays a role in the DNA damage response (DDR) pathway by regulating postreplication repair of UV-damaged DNA and genomic stability maintenance. The SLF1-SLF2 complex acts to link RAD18 with the SMC5-SMC6 complex at replication-coupled interstrand cross-links (ICL) and DNA double-strand breaks (DSBs) sites on chromatin during DNA repair in response to stalled replication forks. Promotes the recruitment of SLF2 and the SMC5-SMC6 complex to DNA lesions. The protein is SMC5-SMC6 complex localization factor protein 1 of Mus musculus (Mouse).